We begin with the raw amino-acid sequence, 102 residues long: MPSQKIRIRLKAYDHKLLDVSVGEIVDTAKRTGARVAGPIPLPTVVNKYCVLRGPHVDKKSREQFEIRTHKRLIDILEPTQQTVDALMKLDLSAGVDVEIKL.

Belongs to the universal ribosomal protein uS10 family. In terms of assembly, part of the 30S ribosomal subunit.

Its function is as follows. Involved in the binding of tRNA to the ribosomes. This is Small ribosomal subunit protein uS10 from Geotalea daltonii (strain DSM 22248 / JCM 15807 / FRC-32) (Geobacter daltonii).